Reading from the N-terminus, the 584-residue chain is Myo-inositol transporter 1 (584 aa).

At 1–81 the chain is on the cytoplasmic side; it reads MGIHIPYLTS…TSVMITFNQS (81 aa). Thr12 bears the Phosphothreonine mark. Residues 13-42 form a disordered region; the sequence is SQSNVGDAVGNADSVEFNSEHDSPSKRGKI. A phosphoserine mark is found at Ser26, Ser31, Ser35, Ser37, and Ser46. Residues 30–42 are compositionally biased toward basic and acidic residues; the sequence is NSEHDSPSKRGKI. A helical transmembrane segment spans residues 82–102; it reads LSPFIITLTFVASISGFMFGY. The Extracellular portion of the chain corresponds to 103-129; sequence DTGYISSALISIGTDLDHKVLTYGEKE. A helical transmembrane segment spans residues 130 to 150; the sequence is IVTAATSLGALITSIFAGTAA. At 151–163 the chain is on the cytoplasmic side; the sequence is DIFGRKRCLMGSN. The helical transmembrane segment at 164–184 threads the bilayer; the sequence is LMFVIGAILQVSAHTFWQMAV. Topologically, residues 185–186 are extracellular; the sequence is GR. A helical membrane pass occupies residues 187-207; it reads LIMGFGVGIGSLIAPLFISEI. At 208 to 215 the chain is on the cytoplasmic side; it reads APKMIRGR. A helical transmembrane segment spans residues 216 to 236; that stretch reads LTVINSLWLTGGQLVAYGCGA. Residues 237–246 are Extracellular-facing; it reads GLNYVNNGWR. A helical transmembrane segment spans residues 247 to 267; it reads ILVGLSLIPTAVQFTCLCFLP. Residues 268–349 are Cytoplasmic-facing; that stretch reads DTPRYYVMKG…IGCGLQAIQQ (82 aa). A helical transmembrane segment spans residues 350-370; sequence FTGWNSLMYFSGTIFETVGFK. Residue Asn371 is glycosylated (N-linked (GlcNAc...) asparagine). Topologically, residues 371–376 are extracellular; that stretch reads NSSAVS. Residues 377-397 traverse the membrane as a helical segment; it reads IIVSGTNFIFTLVAFFSIDKI. The Cytoplasmic portion of the chain corresponds to 398-400; sequence GRR. A helical membrane pass occupies residues 401-421; it reads TILLIGLPGMTMALVVCSIAF. Topologically, residues 422–441 are extracellular; it reads HFLGIKFDGAVAVVVSSGFS. Residues 442 to 462 form a helical membrane-spanning segment; the sequence is SWGIVIIVFIIVFAAFYALGI. Topologically, residues 463–486 are cytoplasmic; the sequence is GTVPWQQSELFPQNVRGIGTSYAT. The chain crosses the membrane as a helical span at residues 487–507; sequence ATNWAGSLVIASTFLTMLQNI. Residues 508 to 510 are Extracellular-facing; the sequence is TPA. The chain crosses the membrane as a helical span at residues 511-531; it reads GTFAFFAGLSCLSTIFCYFCY. Residues 532–584 lie on the Cytoplasmic side of the membrane; the sequence is PELSGLELEEVQTILKDGFNIKASKALAKKRKQQVARVHELKYEPTQEIIEDI. Lys573 participates in a covalent cross-link: Glycyl lysine isopeptide (Lys-Gly) (interchain with G-Cter in ubiquitin).

The protein belongs to the major facilitator superfamily. Sugar transporter (TC 2.A.1.1) family.

The protein localises to the cell membrane. The enzyme catalyses myo-inositol(out) + H(+)(out) = myo-inositol(in) + H(+)(in). Major transporter for myo-inositol. The chain is Myo-inositol transporter 1 (ITR1) from Saccharomyces cerevisiae (strain ATCC 204508 / S288c) (Baker's yeast).